The following is a 391-amino-acid chain: Cold-shock protein CS120 (391 aa).

A run of 17 repeats spans residues 9-31 (GEKK…DHKE), 49-62 (TGGA…AGTT), 72-94 (GEKK…DHQQ), 95-108 (TGGT…TGTA), 115-128 (TGGT…TGTA), 135-148 (TGGT…TGVT), 156-178 (GEKK…DHQQ), 179-192 (TGGT…TGTA), 199-212 (GGGT…TGMT), 220-242 (GEKK…DHQQ), 243-256 (TGGT…TGTA), 263-276 (GGGT…TGMT), 284-306 (GEKK…DHQQ), 307-320 (TGGA…TGTA), 327-340 (GGGT…AGVI), 350-363 (TGGT…TGTT), and 374-391 (GEKK…PGQH). The segment at 9 to 391 (GEKKGIMEKI…KIKDKLPGQH (383 aa)) is 6 X 23 AA approximate repeats. The segment covering 21 to 33 (KLPGGHGDHKETA) has biased composition (basic and acidic residues). A disordered region spans residues 21 to 391 (KLPGGHGDHK…KIKDKLPGQH (371 aa)). The span at 34-59 (GTHGHPGTATHGAPATGGAYGQQGHA) shows a compositional bias: low complexity. The 11 X 14 AA approximate repeats stretch occupies residues 49–363 (TGGAYGQQGH…HGQHGHTGTT (315 aa)). Positions 70–92 (HAGEKKGVMENIKDKLPGGHQDH) are enriched in basic and acidic residues. The segment covering 93 to 145 (QQTGGTYGQQGHTGTATHGTPATGGTYGQQGHTGTATHGTPATGGTYGEQGHT) has biased composition (low complexity). Residues 155–176 (TGEKKGVMENIKEKLPGGHGDH) are compositionally biased toward basic and acidic residues. Low complexity predominate over residues 177 to 196 (QQTGGTYGQQGHTGTATHGT). Basic and acidic residues predominate over residues 219–240 (TGEKKGVMENIKDKLPGGHGDH). Low complexity-rich tracts occupy residues 241 to 260 (QQTG…TQGT) and 272 to 282 (HTGMTGAGTHS). Residues 283–304 (TGEKKGVMENIKEKLPGGHSDH) show a composition bias toward basic and acidic residues. Low complexity-rich tracts occupy residues 305 to 324 (QQTG…THGT) and 333 to 351 (QHGH…TATG). The segment covering 361–372 (GTTGTGTHGSDG) has biased composition (gly residues). Residues 373 to 391 (IGEKKSLMDKIKDKLPGQH) show a composition bias toward basic and acidic residues.

It belongs to the plant dehydrin family.

In terms of biological role, may reduce intracellular freezing damage during winter by hydrogen-bonding to the lattice of the nascent ice crystals, thus modifying the structure and/or propagation of ice crystals. The protein is Cold-shock protein CS120 (CS120) of Triticum aestivum (Wheat).